Consider the following 216-residue polypeptide: Ribosomal RNA large subunit methyltransferase E (216 aa).

Residues Gly-71, Trp-73, Asp-88, Asp-104, and Asp-126 each coordinate S-adenosyl-L-methionine. The active-site Proton acceptor is Lys-166.

The protein belongs to the class I-like SAM-binding methyltransferase superfamily. RNA methyltransferase RlmE family.

The protein resides in the cytoplasm. It carries out the reaction uridine(2552) in 23S rRNA + S-adenosyl-L-methionine = 2'-O-methyluridine(2552) in 23S rRNA + S-adenosyl-L-homocysteine + H(+). Its function is as follows. Specifically methylates the uridine in position 2552 of 23S rRNA at the 2'-O position of the ribose in the fully assembled 50S ribosomal subunit. This chain is Ribosomal RNA large subunit methyltransferase E, found in Wolbachia sp. subsp. Brugia malayi (strain TRS).